The chain runs to 166 residues: Cofilin-1 (166 aa).

At A2 the chain carries N-acetylalanine. S3 carries the post-translational modification Phosphoserine; by NRK. An ADF-H domain is found at 4–153 (GVAVSDGVIK…KDRCTLAEKL (150 aa)). S8 carries the phosphoserine modification. Residue K13 is modified to N6-acetyllysine. A Phosphothreonine modification is found at T25. Positions 30–34 (KKRKK) match the Nuclear localization signal motif. S41 is subject to Phosphoserine. T63 is modified (phosphothreonine). Residue Y68 is modified to Phosphotyrosine. At K73 the chain carries N6-acetyllysine. Phosphotyrosine is present on Y82. S108 carries the phosphoserine modification. K132 is covalently cross-linked (Glycyl lysine isopeptide (Lys-Gly) (interchain with G-Cter in SUMO2)). Y140 carries the phosphotyrosine modification. The residue at position 144 (K144) is an N6-acetyllysine. Phosphoserine is present on S156.

Belongs to the actin-binding proteins ADF family. As to quaternary structure, can bind G- and F-actin in a 1:1 ratio of cofilin to actin. It is a major component of intranuclear and cytoplasmic actin rods. Interacts with the subcortical maternal complex (SCMC) via interaction with TLE6 isoform 1 and NLRP5. Interacts with C9orf72. In terms of assembly, (Microbial infection) Interacts with human respiratory syncytial virus (HRSV) matrix protein; this interaction probably facilitates viral replication. Inactivated by phosphorylation on Ser-3. Phosphorylated on Ser-3 in resting cells. Dephosphorylated by PDXP/chronophin; this restores its activity in promoting actin filament depolymerization. The phosphorylation of Ser-24 may prevent recognition of the nuclear localization signal. Phosphorylated via a ARRB1-RAC1-LIMK1-PAK1 cascade upon active ligand stimulation of atypical chemokine receptor ACKR2. In terms of tissue distribution, widely distributed in various tissues.

It localises to the nucleus matrix. It is found in the cytoplasm. The protein resides in the cytoskeleton. Its subcellular location is the cell projection. The protein localises to the ruffle membrane. It localises to the lamellipodium membrane. It is found in the lamellipodium. The protein resides in the growth cone. Its subcellular location is the axon. Its function is as follows. Binds to F-actin and exhibits pH-sensitive F-actin depolymerizing activity. In conjunction with the subcortical maternal complex (SCMC), plays an essential role for zygotes to progress beyond the first embryonic cell divisions via regulation of actin dynamics. Required for the centralization of the mitotic spindle and symmetric division of zygotes. Plays a role in the regulation of cell morphology and cytoskeletal organization in epithelial cells. Required for the up-regulation of atypical chemokine receptor ACKR2 from endosomal compartment to cell membrane, increasing its efficiency in chemokine uptake and degradation. Required for neural tube morphogenesis and neural crest cell migration. In Homo sapiens (Human), this protein is Cofilin-1 (CFL1).